Here is a 568-residue protein sequence, read N- to C-terminus: MRGGAAGKRRTTVGFGGAPPPPPPSIEQQRHLFNSRDSDASFASSRPSSIGLGGRGASDDRSSMIRFINAFLSTHNFPISIRGNPVPSVKDISETLKFLLSALDYPCDSIKWDEDLVFFLKSQKCPFKITKSSLKAPNTPHNWPTVLAVVHWLAELARFHQHLVSNSTSVPEDNSMNFFAIQSFGHFIRGEDDKVNDLDSQFLGKLEAEKTSVAETISGCEKISGELEAKLESLRKGPSKKESLEKVKADLENDVNKFRTIVVEYTDRNPAMEKVVEEKAKELKAKEEERERISVENKELKKSVELQNFSAADVNRMRRELQAVERDVADAEVARDGWDQKAWELNSQIRNQFHQIQTLAIDCNQALRRLKLDIQFAVNERGETPAAVMGVDYKSVVKPALCSLCDGIKGSSAEKVEELVTLQHHKSEMASKIESKRSLLGSIQLQINDLEEKMKLVKKETQELSTKCDLEAKTLVESVKAEALNLEVVEKEAAEFVKASELRLQEAVKESEEEVQACAAQLFALIDSISKQKEYMDSKISEIKTGVADTASAVSEIYKANFKKNLGI.

The interval 1–59 is disordered; that stretch reads MRGGAAGKRRTTVGFGGAPPPPPPSIEQQRHLFNSRDSDASFASSRPSSIGLGGRGASD. The segment covering 28 to 39 has biased composition (basic and acidic residues); the sequence is QQRHLFNSRDSD. Over residues 40-49 the composition is skewed to low complexity; sequence ASFASSRPSS. 2 coiled-coil regions span residues 241–334 and 433–469; these read KESL…AEVA and IESK…TKCD.

The protein belongs to the NDC80/HEC1 family. Component of the NDC80 complex, which consists of NDC80, NUF2, SPC24 and SPC25.

Its subcellular location is the chromosome. The protein localises to the centromere. Acts as a component of the essential kinetochore-associated NDC80 complex, which is required for chromosome segregation and spindle checkpoint activity to ensure proper cell division. The chain is Kinetochore protein NDC80 homolog from Arabidopsis thaliana (Mouse-ear cress).